Reading from the N-terminus, the 549-residue chain is Arginine--tRNA ligase (549 aa).

The 'HIGH' region motif lies at 132 to 142 (ANPTGPLHLAH).

The protein belongs to the class-I aminoacyl-tRNA synthetase family. Monomer.

The protein resides in the cytoplasm. It catalyses the reaction tRNA(Arg) + L-arginine + ATP = L-arginyl-tRNA(Arg) + AMP + diphosphate. In Renibacterium salmoninarum (strain ATCC 33209 / DSM 20767 / JCM 11484 / NBRC 15589 / NCIMB 2235), this protein is Arginine--tRNA ligase.